The following is a 629-amino-acid chain: Pumilio homolog 3 (629 aa).

2 stretches are compositionally biased toward basic residues: residues methionine 1–phenylalanine 10 and proline 18–lysine 37. The segment at methionine 1–tryptophan 92 is disordered. Over residues lysine 62–tryptophan 92 the composition is skewed to basic and acidic residues. Positions lysine 88–lysine 100 match the Nuclear localization signal motif. Residues arginine 120–leucine 473 enclose the PUM-HD domain. 11 Pumilio repeats span residues histidine 160 to serine 195, lysine 196 to histidine 231, serine 232 to glycine 260, proline 272 to histidine 308, serine 309 to threonine 344, histidine 345 to glycine 380, glutamate 381 to asparagine 418, lysine 419 to aspartate 487, lysine 488 to histidine 534, proline 535 to valine 579, and asparagine 580 to serine 618.

In adult, expressed at high levels in eye and ovary and at lower levels in brain, testis and head kidney. In the adult ovary, prominently expressed in early immature follicles.

Its subcellular location is the nucleus. The protein resides in the nucleolus. It localises to the nucleoplasm. The protein localises to the chromosome. In terms of biological role, inhibits the poly(ADP-ribosyl)ation activity of PARP1 and the degradation of PARP1 by CASP3 following genotoxic stress. Binds to double-stranded RNA or DNA without sequence specificity. Involved in development of the eye and of primordial germ cells. This is Pumilio homolog 3 (pum3) from Danio rerio (Zebrafish).